The chain runs to 145 residues: Inner membrane protein YiaA (145 aa).

Residues 1-12 (MDNKISTYSPAF) lie on the Cytoplasmic side of the membrane. Residues 13–32 (SIVSWIALVGGIVTYLLGLW) form a helical membrane-spanning segment. The Periplasmic segment spans residues 33 to 41 (NAEMQLNEK). Residues 42 to 59 (GYYFAVLVLGLFSAASYQ) form a helical membrane-spanning segment. Topologically, residues 60 to 71 (KTVRDKYEGIPT) are cytoplasmic. The helical transmembrane segment at 72 to 94 (TSIYYMTCLTVFIISVALLMVGL) threads the bilayer. The Periplasmic portion of the chain corresponds to 95–98 (WNAT). A helical membrane pass occupies residues 99–121 (LLLSEKGFYGLAFFLSLFGAVAV). The Cytoplasmic portion of the chain corresponds to 122–145 (QKNIRDAGINPPKETQVTQEEYSE).

The protein resides in the cell inner membrane. This Escherichia coli (strain K12) protein is Inner membrane protein YiaA (yiaA).